We begin with the raw amino-acid sequence, 484 residues long: Replication-associated protein (484 aa).

The short motif at 146-153 (IRKYHQSV) is the Nuclear localization signal element.

Its subcellular location is the host nucleus. Its function is as follows. Plays an essential for the replication of viral DNA. Presumably cleaves viral genomic dsRNA replicative form to initiate rolling circle replication. In Chaetoceros (Chaetoceros sp. DNA virus 7), this protein is Replication-associated protein.